A 1002-amino-acid chain; its full sequence is Copper-transporting ATPase HMA5 (1002 aa).

Residues 32–48 (RPRYPSMPRRPRSAAVA) are compositionally biased toward low complexity. The interval 32 to 63 (RPRYPSMPRRPRSAAVAGEGGEGGGGGGDGDL) is disordered. Residues 49–60 (GEGGEGGGGGGD) show a composition bias toward gly residues. HMA domains are found at residues 75–141 (KVAV…FEAK), 153–219 (LVCR…FEAI), and 228–294 (SRID…SGDL). Cysteine 86, cysteine 89, cysteine 164, and cysteine 167 together coordinate Cu(+). 8 consecutive transmembrane segments (helical) span residues 320–340 (FLWS…FMYI), 354–374 (MMSI…FVIG), 392–412 (MDVL…YSIL), 425–445 (FFET…LEIL), 585–605 (VFVP…FLAG), 624–644 (LALQ…LGLA), 943–963 (YVWA…VLFP), and 972–992 (WVAG…SLLL).

It belongs to the cation transport ATPase (P-type) (TC 3.A.3) family. Type IB subfamily. As to expression, expressed in root pericycle cells, xylem region of diffuse vascular bundles in the first node, and vascular tissues of peduncle, rachis and husk.

The protein localises to the cell membrane. The catalysed reaction is Cu(+)(in) + ATP + H2O = Cu(+)(out) + ADP + phosphate + H(+). Functionally, copper (Cu) transporter that plays an essential role in promoting translocation of Cu from roots to shoots. Involved in loading Cu to the xylem of the roots and other organs, including panicles. The polypeptide is Copper-transporting ATPase HMA5 (Oryza sativa subsp. japonica (Rice)).